The following is a 233-amino-acid chain: Purine nucleoside phosphorylase DeoD-type (233 aa).

His4 lines the a purine D-ribonucleoside pocket. Residues Gly20, Arg24, Arg43, and Arg87–Ser90 contribute to the phosphate site. Residues Glu178 to Glu180 and Ser202 to Asp203 each bind a purine D-ribonucleoside. Catalysis depends on Asp203, which acts as the Proton donor.

It belongs to the PNP/UDP phosphorylase family. Homohexamer; trimer of homodimers.

The catalysed reaction is a purine D-ribonucleoside + phosphate = a purine nucleobase + alpha-D-ribose 1-phosphate. It carries out the reaction a purine 2'-deoxy-D-ribonucleoside + phosphate = a purine nucleobase + 2-deoxy-alpha-D-ribose 1-phosphate. Its function is as follows. Catalyzes the reversible phosphorolytic breakdown of the N-glycosidic bond in the beta-(deoxy)ribonucleoside molecules, with the formation of the corresponding free purine bases and pentose-1-phosphate. This is Purine nucleoside phosphorylase DeoD-type from Bacillus subtilis (strain 168).